The following is a 485-amino-acid chain: Glutamyl-tRNA(Gln) amidotransferase subunit A (485 aa).

Active-site charge relay system residues include lysine 79 and serine 154. Residue serine 178 is the Acyl-ester intermediate of the active site.

The protein belongs to the amidase family. GatA subfamily. As to quaternary structure, heterotrimer of A, B and C subunits.

The catalysed reaction is L-glutamyl-tRNA(Gln) + L-glutamine + ATP + H2O = L-glutaminyl-tRNA(Gln) + L-glutamate + ADP + phosphate + H(+). In terms of biological role, allows the formation of correctly charged Gln-tRNA(Gln) through the transamidation of misacylated Glu-tRNA(Gln) in organisms which lack glutaminyl-tRNA synthetase. The reaction takes place in the presence of glutamine and ATP through an activated gamma-phospho-Glu-tRNA(Gln). This is Glutamyl-tRNA(Gln) amidotransferase subunit A from Clostridium botulinum (strain Langeland / NCTC 10281 / Type F).